The sequence spans 332 residues: Ubiquinol oxidase 1a, mitochondrial (332 aa).

The transit peptide at Met-1 to Met-54 directs the protein to the mitochondrion. The chain crosses the membrane as a helical span at residues Ala-157–Leu-177. Positions 161, 200, and 203 each coordinate Fe cation. A helical membrane pass occupies residues Ala-219 to Ser-239. 3 residues coordinate Fe cation: Glu-251, Glu-302, and His-305.

It belongs to the alternative oxidase family. As to quaternary structure, homodimer; disulfide-linked. Fe cation serves as cofactor. Expressed in roots, leaf sheaths and leaf blades.

It is found in the mitochondrion inner membrane. The catalysed reaction is 2 a ubiquinol + O2 = 2 a ubiquinone + 2 H2O. Its function is as follows. Catalyzes the cyanide-resistant oxidation of ubiquinol and the reduction of molecular oxygen to water, but does not translocate protons and consequently is not linked to oxidative phosphorylation. May increase respiration when the cytochrome respiratory pathway is restricted, or in response to low temperatures. The protein is Ubiquinol oxidase 1a, mitochondrial of Oryza sativa subsp. japonica (Rice).